The following is a 73-amino-acid chain: DNA-directed RNA polymerase subunit epsilon (73 aa).

It belongs to the RNA polymerase subunit epsilon family. RNAP is composed of a core of 2 alpha, a beta and a beta' subunit. The core is associated with a delta subunit, and at least one of epsilon or omega. When a sigma factor is associated with the core the holoenzyme is formed, which can initiate transcription.

The enzyme catalyses RNA(n) + a ribonucleoside 5'-triphosphate = RNA(n+1) + diphosphate. A non-essential component of RNA polymerase (RNAP). The polypeptide is DNA-directed RNA polymerase subunit epsilon (Lactobacillus acidophilus (strain ATCC 700396 / NCK56 / N2 / NCFM)).